The following is a 117-amino-acid chain: UPF0102 protein Ssed_4252 (117 aa).

This sequence belongs to the UPF0102 family.

This is UPF0102 protein Ssed_4252 from Shewanella sediminis (strain HAW-EB3).